The following is a 468-amino-acid chain: Ribulose bisphosphate carboxylase large chain (468 aa).

The residue at position 5 (K5) is an N6,N6,N6-trimethyllysine. Residues N114 and T164 each contribute to the substrate site. The active-site Proton acceptor is K166. K168 lines the substrate pocket. Residues K192, D194, and E195 each coordinate Mg(2+). At K192 the chain carries N6-carboxylysine. The active-site Proton acceptor is H285. Substrate is bound by residues R286, H318, and S370.

This sequence belongs to the RuBisCO large chain family. Type I subfamily. As to quaternary structure, heterohexadecamer of 8 large chains and 8 small chains; disulfide-linked. The disulfide link is formed within the large subunit homodimers. The cofactor is Mg(2+). In terms of processing, the disulfide bond which can form in the large chain dimeric partners within the hexadecamer appears to be associated with oxidative stress and protein turnover.

It localises to the plastid. The protein resides in the chloroplast. The catalysed reaction is 2 (2R)-3-phosphoglycerate + 2 H(+) = D-ribulose 1,5-bisphosphate + CO2 + H2O. It carries out the reaction D-ribulose 1,5-bisphosphate + O2 = 2-phosphoglycolate + (2R)-3-phosphoglycerate + 2 H(+). In terms of biological role, ruBisCO catalyzes two reactions: the carboxylation of D-ribulose 1,5-bisphosphate, the primary event in carbon dioxide fixation, as well as the oxidative fragmentation of the pentose substrate in the photorespiration process. Both reactions occur simultaneously and in competition at the same active site. In Tecoma stans (Yellow bells), this protein is Ribulose bisphosphate carboxylase large chain.